Here is a 529-residue protein sequence, read N- to C-terminus: MEQEKKLLVSDSNSFMERESLKSPFTGDTSMNNLETVHHNNSKADKLKEKPSEWSKRHRPQHYKHEDAKEMPLTWVQDEIWCHDSYESDGKSENWGNFIAKEEEKPNHQEWDSGEHTNACVQQNSSFVDRPYKCSECWKSFSNSSHLRTHQRTHSGEKPYKCSECAKCFCNSSHLIQHLRMHTGEKPYQCGECGKSFSNTSHLIIHERTHTGEKPYKCPECGKRFSSSSHLIQHHRSHTGEKPYECSVCGKGFSHSYVLIEHQRTHTGEKPYKCPDCGKSFSQSSSLIRHQRTHTGEKPYKCLECEKSFGCNSTLIKHQRIHTGEKPYQCPECGKNFSRSSNLITHQKMHTGEKSYESSEYEESLGQNCNVIEECRIQLGEKPYRCCECGKSFGLSSHLIRHQRTHTGEKPYRCSECWKTFSQSSTLVIHQRTHTGEKPYKCPDCGESFSQSFNLIRHRRTHIGEKPYKCTSCEKCFSRSAYLSQHRKIHVEKPFESPDVGDFPHEWTWKNCSGEMPFISSFSVSNSSS.

A disordered region spans residues methionine 1–histidine 62. Residues lysine 5 and lysine 6 each participate in a glycyl lysine isopeptide (Lys-Gly) (interchain with G-Cter in SUMO2) cross-link. Residues threonine 26–glutamate 35 are compositionally biased toward polar residues. The segment covering threonine 36–serine 55 has biased composition (basic and acidic residues). 12 consecutive C2H2-type zinc fingers follow at residues tyrosine 132–histidine 154, tyrosine 160–histidine 182, tyrosine 188–histidine 210, tyrosine 216–histidine 238, tyrosine 244–histidine 266, tyrosine 272–histidine 294, tyrosine 300–histidine 322, tyrosine 328–histidine 350, tyrosine 384–histidine 406, tyrosine 412–histidine 434, tyrosine 440–histidine 462, and tyrosine 468–histidine 490.

The protein belongs to the krueppel C2H2-type zinc-finger protein family.

It is found in the nucleus. Its function is as follows. May be involved in transcriptional regulation. The polypeptide is Zinc finger protein 572 (ZNF572) (Homo sapiens (Human)).